Here is a 565-residue protein sequence, read N- to C-terminus: Oxygen-dependent choline dehydrogenase (565 aa).

FAD is bound at residue 7–36 (DYIICGAGSAGNVLATRLTEDPGVTVLLLE). The Proton acceptor role is filled by His-474.

The protein belongs to the GMC oxidoreductase family. The cofactor is FAD.

The catalysed reaction is choline + A = betaine aldehyde + AH2. It carries out the reaction betaine aldehyde + NAD(+) + H2O = glycine betaine + NADH + 2 H(+). It functions in the pathway amine and polyamine biosynthesis; betaine biosynthesis via choline pathway; betaine aldehyde from choline (cytochrome c reductase route): step 1/1. Involved in the biosynthesis of the osmoprotectant glycine betaine. Catalyzes the oxidation of choline to betaine aldehyde and betaine aldehyde to glycine betaine at the same rate. This chain is Oxygen-dependent choline dehydrogenase, found in Burkholderia pseudomallei (strain 1710b).